Reading from the N-terminus, the 435-residue chain is D-amino acid dehydrogenase (435 aa).

3–17 (VIVLGGGVLGVSTAW) lines the FAD pocket.

The protein belongs to the DadA oxidoreductase family. The cofactor is FAD.

The enzyme catalyses a D-alpha-amino acid + A + H2O = a 2-oxocarboxylate + AH2 + NH4(+). It functions in the pathway amino-acid degradation; D-alanine degradation; NH(3) and pyruvate from D-alanine: step 1/1. Its function is as follows. Oxidative deamination of D-amino acids. The protein is D-amino acid dehydrogenase of Chromobacterium violaceum (strain ATCC 12472 / DSM 30191 / JCM 1249 / CCUG 213 / NBRC 12614 / NCIMB 9131 / NCTC 9757 / MK).